Reading from the N-terminus, the 113-residue chain is Large ribosomal subunit protein P1 (113 aa).

Positions 84 to 113 are disordered; sequence APAAAAKKETKKEEVKKEESDDDMGMGLFD. The segment covering 89-102 has biased composition (basic and acidic residues); sequence AKKETKKEEVKKEE.

It belongs to the eukaryotic ribosomal protein P1/P2 family. In terms of assembly, P1 and P2 exist as dimers at the large ribosomal subunit.

Functionally, plays an important role in the elongation step of protein synthesis. The protein is Large ribosomal subunit protein P1 (rplp1) of Dictyostelium discoideum (Social amoeba).